A 339-amino-acid polypeptide reads, in one-letter code: MSASGLPFDDFRELIRNLPGPDLGAERAVREREVTLTKPAGSLGRLEEIVAWLATWTGKRTPQVNRPLVAVFAGNHGVTAKNITPFPPSVTAQMVENFAAGGAAINQICIANDLGLKVFDLALEHPTGDITEEAAMDERTCAATMAFGMEAIAGGTDLLCIGEMGIGNTTIAAAIALALFGGTAEDWVGPGTGSTGELMQRKLAAVRQAVALHQPHLQDPLEVLRCLGGREIAAMAGAILAARMEKIPVIVDGFVASAAAAVLYAANPEAIDHCMFGHVSAEPGHRKLLAKMGKEPLLDLGMRLGEGTGAALAANIVKAAALCHSGMATFEQAGVSASK.

The active-site Proton acceptor is E306.

This sequence belongs to the CobT family.

The catalysed reaction is 5,6-dimethylbenzimidazole + nicotinate beta-D-ribonucleotide = alpha-ribazole 5'-phosphate + nicotinate + H(+). Its pathway is nucleoside biosynthesis; alpha-ribazole biosynthesis; alpha-ribazole from 5,6-dimethylbenzimidazole: step 1/2. Functionally, catalyzes the synthesis of alpha-ribazole-5'-phosphate from nicotinate mononucleotide (NAMN) and 5,6-dimethylbenzimidazole (DMB). The chain is Nicotinate-nucleotide--dimethylbenzimidazole phosphoribosyltransferase from Brucella canis (strain ATCC 23365 / NCTC 10854 / RM-666).